We begin with the raw amino-acid sequence, 79 residues long: Protein RALF-like 15 (79 aa).

A signal peptide spans 1 to 28 (MGMSKSIKVIVSLALILFLALAATKVEA). Intrachain disulfides connect Cys46/Cys54 and Cys66/Cys72.

It belongs to the plant rapid alkalinization factor (RALF) family.

The protein resides in the secreted. Functionally, cell signaling peptide that may regulate plant stress, growth, and development. Mediates a rapid alkalinization of extracellular space by mediating a transient increase in the cytoplasmic Ca(2+) concentration leading to a calcium-dependent signaling events through a cell surface receptor and a concomitant activation of some intracellular mitogen-activated protein kinases. The chain is Protein RALF-like 15 (RALFL15) from Arabidopsis thaliana (Mouse-ear cress).